The chain runs to 366 residues: MKIADLMTLLDHHVPFRTAESWDNVGLLIGDEDVEVTGVLTALDCTLEVVNEAIEKGYNTIISHHPLIFKGVTSLKANGYGLIIRKLIQHDINLIAMHTNLDVNPHGVNMMLAKAMGLKNISIINNQQDVYYKVQTYIPKDNVGPFKDKLSENGLAQEGNYEYCFFESEGRGQFKPVGEANPTIGQIDKIEYVDEVKIEFMIDACQKSWAEQLIKQYHPYETPVFDFIEIKQTSLYGLGVMAEVDNQMTLEDFAANIKSKLNIPSVRFVGESNQKIKRIAIIGGSGIGYEYQAVQQGADVFVTGDIKHHDALDAKIHGVNLIDINHYSEYVMKEGLKTLLMNWFNTEKINIDVEASTINTDPFEYI.

Zn(2+) is bound by residues His64, His65, Asp102, His326, and Glu329.

Belongs to the GTP cyclohydrolase I type 2/NIF3 family. In terms of assembly, homohexamer.

This is GTP cyclohydrolase 1 type 2 homolog from Staphylococcus aureus (strain MRSA252).